Reading from the N-terminus, the 406-residue chain is RILP-like protein 1 (406 aa).

Serine 7 is modified (phosphoserine). The RH1 domain maps to 10 to 97; the sequence is AALSALEKNV…RVERMDRIEK (88 aa). Cysteine 47 bears the S-nitrosocysteine mark. The stretch at 76–258 forms a coiled coil; sequence ELDELRLELD…KLRERLQGEH (183 aa). Disordered stretches follow at residues 255 to 280 and 330 to 354; these read QGEHSQNGEEEEAEIPPQPDGEESIS and EIEEENRIPQPPPITHPRTSPQPES. The residue at position 259 (serine 259) is a Phosphoserine. Residues 262-280 show a composition bias toward acidic residues; sequence GEEEEAEIPPQPDGEESIS. The region spanning 294 to 359 is the RH2 domain; the sequence is RPRFTLQELR…PQPESGIKRL (66 aa).

Belongs to the RILPL family. In terms of assembly, interacts (when S-nitrosylated) with GAPDH. Interacts with RAB8A; interaction is dependent on the phosphorylation of 'Thr-72' of RAB8A. Interacts with RAB10 and RAB12; the interaction is dependent on the phosphorylation of 'Thr-73' of RAB10, and 'Ser-105' of RAB12. Post-translationally, S-nitrosylation is required for the interaction with GAPDH. As to expression, highly expressed in heart, skeletal muscle, brain and lung (at protein level).

The protein resides in the cytoplasm. It localises to the cytosol. It is found in the cytoskeleton. The protein localises to the microtubule organizing center. Its subcellular location is the centrosome. The protein resides in the centriole. It localises to the cilium basal body. Its function is as follows. Plays a role in the regulation of cell shape and polarity. Plays a role in cellular protein transport, including protein transport away from primary cilia. Neuroprotective protein, which acts by sequestring GAPDH in the cytosol and prevent the apoptotic function of GAPDH in the nucleus. Competes with SIAH1 for binding GAPDH. Does not regulate lysosomal morphology and distribution. Binds to RAB10 following LRRK2-mediated RAB10 phosphorylation which leads to inhibition of ciliogenesis. This chain is RILP-like protein 1 (Rilpl1), found in Rattus norvegicus (Rat).